The chain runs to 457 residues: Probable xyloglucan 6-xylosyltransferase 3 (457 aa).

The segment at 1–40 (MGKEDGFRTQKRVSTASSAAAGVLPTTMASGGVRRPPPRG) is disordered. Topologically, residues 1 to 51 (MGKEDGFRTQKRVSTASSAAAGVLPTTMASGGVRRPPPRGRQIQKTFNNVK) are cytoplasmic. Residues 52-71 (MTILCGFVTILVLRGTIGIN) form a helical; Signal-anchor for type II membrane protein membrane-spanning segment. Residues 72-457 (FGTSDADVVN…TTPLKIEARS (386 aa)) lie on the Lumenal side of the membrane. N-linked (GlcNAc...) asparagine glycans are attached at residues N115 and N431.

The protein belongs to the glycosyltransferase 34 family.

It is found in the golgi apparatus membrane. It catalyses the reaction Transfers an alpha-D-xylosyl residue from UDP-D-xylose to a glucose residue in xyloglucan, forming an alpha-(1-&gt;6)-D-xylosyl-D-glucose linkage.. In terms of biological role, probable xyloglucan xylosyltransferase involved in the biosynthesis of xyloglucan. This chain is Probable xyloglucan 6-xylosyltransferase 3, found in Arabidopsis thaliana (Mouse-ear cress).